A 474-amino-acid chain; its full sequence is MKRQADRSGTVVAVRGGIVDARFDGEMPALHSLLLAGAQDEIVVEVMLHLDGGHVRGNALTPTQGLACGDTIKDSGAPLQAPVGQAILGRVFNVFGQPIDRREPPDGCRWRSVLTKPAGLTERSSKTEMFITGIKAIDVLAPLERGGKAGLFGGAGVGKTVLITELIHNMVGQHEGVSLFCGIGERCREGEELFREMREAGVLDNTVMVFGQMNEPPGARFRVGLTALTMAEYFRDDQGRDVLLLIDNIFRFIQAGMEISGLLGLMPSRLGYQPTMGTELAELQERISSTRHAAITSIQAVYVPADDFTDPAAVHTFSHLSASIVLSRRRASEGLYPAIDPLASTSNILNPRIVGERHYRLAQEIRRTLATYEELKDIIAMLGLEELSREDRRIVFRARRLERFLTQPFHTTQQFTGMQGRTVALDAALNGCEAILNDEFSEAPEKILYMIGGLEEARQRLREEETAGHGEEPP.

Residue 153-160 (GGAGVGKT) coordinates ATP.

This sequence belongs to the ATPase alpha/beta chains family. In terms of assembly, F-type ATPases have 2 components, CF(1) - the catalytic core - and CF(0) - the membrane proton channel. CF(1) has five subunits: alpha(3), beta(3), gamma(1), delta(1), epsilon(1). CF(0) has three main subunits: a(1), b(2) and c(9-12). The alpha and beta chains form an alternating ring which encloses part of the gamma chain. CF(1) is attached to CF(0) by a central stalk formed by the gamma and epsilon chains, while a peripheral stalk is formed by the delta and b chains.

The protein resides in the cell inner membrane. It carries out the reaction ATP + H2O + 4 H(+)(in) = ADP + phosphate + 5 H(+)(out). Produces ATP from ADP in the presence of a proton gradient across the membrane. The catalytic sites are hosted primarily by the beta subunits. The polypeptide is ATP synthase subunit beta 2 (Syntrophotalea carbinolica (strain DSM 2380 / NBRC 103641 / GraBd1) (Pelobacter carbinolicus)).